The following is a 348-amino-acid chain: Tetraacyldisaccharide 4'-kinase (348 aa).

ATP is bound at residue 50–57; sequence TMGGTGKT.

It belongs to the LpxK family.

The catalysed reaction is a lipid A disaccharide + ATP = a lipid IVA + ADP + H(+). The protein operates within glycolipid biosynthesis; lipid IV(A) biosynthesis; lipid IV(A) from (3R)-3-hydroxytetradecanoyl-[acyl-carrier-protein] and UDP-N-acetyl-alpha-D-glucosamine: step 6/6. Functionally, transfers the gamma-phosphate of ATP to the 4'-position of a tetraacyldisaccharide 1-phosphate intermediate (termed DS-1-P) to form tetraacyldisaccharide 1,4'-bis-phosphate (lipid IVA). The chain is Tetraacyldisaccharide 4'-kinase from Desulfotalea psychrophila (strain LSv54 / DSM 12343).